A 98-amino-acid polypeptide reads, in one-letter code: Integration host factor subunit beta (98 aa).

The protein belongs to the bacterial histone-like protein family. In terms of assembly, heterodimer of an alpha and a beta chain.

This protein is one of the two subunits of integration host factor, a specific DNA-binding protein that functions in genetic recombination as well as in transcriptional and translational control. This chain is Integration host factor subunit beta, found in Pseudomonas putida (strain W619).